The primary structure comprises 57 residues: UPF0391 membrane protein XOO1885 (57 aa).

The next 2 membrane-spanning stretches (helical) occupy residues 4-24 and 33-53; these read WAIIFAIIGLIAGALGFGGMA and FLFWAGIIIAIVLFVLGMTIA.

Belongs to the UPF0391 family.

Its subcellular location is the cell membrane. The chain is UPF0391 membrane protein XOO1885 from Xanthomonas oryzae pv. oryzae (strain KACC10331 / KXO85).